The sequence spans 176 residues: MNGDEDWLTVGKLVAAQGMQGELRINPSSDFPERFTLPGQRWLKERNGEPRPIELLTGRQLPGRSLYVVKFAGVNNRNAAEALVGQNLLVPSSDRPSLAEGEFHLLDLVGLEARLQAEGPAIGHVIDLTTAGNDLLEIELLAGRRVLVPFVEAIVPEVQLNQGWLRLTPPPGLLEL.

Residues 100 to 173 (EGEFHLLDLV…WLRLTPPPGL (74 aa)) form the PRC barrel domain.

The protein belongs to the RimM family. Binds ribosomal protein uS19.

Its subcellular location is the cytoplasm. In terms of biological role, an accessory protein needed during the final step in the assembly of 30S ribosomal subunit, possibly for assembly of the head region. Essential for efficient processing of 16S rRNA. May be needed both before and after RbfA during the maturation of 16S rRNA. It has affinity for free ribosomal 30S subunits but not for 70S ribosomes. The sequence is that of Ribosome maturation factor RimM from Prochlorococcus marinus (strain MIT 9303).